The following is a 313-amino-acid chain: Epoxide hydrolase 1 (313 aa).

In terms of domain architecture, AB hydrolase-1 spans 25-299 (PAVLFLHGFP…AAHFINQEKA (275 aa)). The active-site Nucleophile is aspartate 100. An an epoxide-binding site is contributed by tyrosine 149. Tyrosine 227 (proton donor) is an active-site residue. Histidine 292 (proton acceptor) is an active-site residue.

This sequence belongs to the AB hydrolase superfamily. Epoxide hydrolase family. As to quaternary structure, homodimer. As to expression, highly expressed in fruits 15 days after anthesis (15-DAA).

The enzyme catalyses an epoxide + H2O = an ethanediol. It catalyses the reaction (24S)-24,25-epoxycucurbitadienol + H2O = (24R)-24,25-dihydroxycucurbitadienol. Its pathway is secondary metabolite biosynthesis; terpenoid biosynthesis. Functionally, epoxide hydrolase involved in the biosynthesis of cucurbitacin and mogroside tetracyclic triterpene natural products (e.g. siamenoside I and mogrosides IV, V and VI). Cucurbitacins have cytotoxic properties and exhibit deterrent taste as a defense barrier against herbivores. Mogrosides are nonsugar highly oxygenated compounds used as high-intensity zero-calorie sweeteners; they also possess pharmacological properties such as regulating immunity, lowering blood sugar and lipid levels, protecting the liver, and acting as antioxidants and antitumor agents. Catalyzes the hydrolysis of aromatic epoxide-containing substrates, such as the conversion of 24,25-epoxycucurbitadienol to 24,25-dihydroxycucurbitadienol. This chain is Epoxide hydrolase 1, found in Siraitia grosvenorii (Monk's fruit).